We begin with the raw amino-acid sequence, 530 residues long: DEK domain-containing chromatin-associated protein 2 (530 aa).

2 stretches are compositionally biased toward basic and acidic residues: residues 1-47 (MATE…AEEE) and 57-68 (AKEGELGEKDKE). Positions 1–130 (MATETLDEKT…PSKSVSIEKG (130 aa)) are disordered. A coiled-coil region spans residues 41-61 (IGEAEEEKKEDEEEGEAKEGE). Acidic residues predominate over residues 69–82 (DDVESEEEEEEEEG). Basic and acidic residues-rich tracts occupy residues 83 to 93 (SGSKKSSEKET) and 100 to 110 (RPTRERKKVER). Residues 185–205 (EKEEEKQRARIKEKIDKCVKE) adopt a coiled-coil conformation. The tract at residues 246-430 (IIADQEKAKK…GKAKAEPTRK (185 aa)) is disordered. Over residues 253 to 263 (AKKRKSTPKRG) the composition is skewed to basic residues. Residues 260–267 (PKRGKSGE) carry the Nuclear localization signal 1 motif. The segment covering 286-332 (SDTEEGKDEGDADSEGTNDPHEEDDAAPEEESDHEKTDTDDEKDEVE) has biased composition (acidic residues). Short sequence motifs (nuclear localization signal) lie at residues 343–350 (SKKTVEES) and 384–391 (AKKQKVDH). Positions 374–384 (KQIAKSTSSPA) are enriched in polar residues. Basic and acidic residues predominate over residues 387–397 (QKVDHVESSKE). The DEK-C domain occupies 426–481 (EPTRKEMLEVVSKILKEVDFNTATLSDILQKLSDHFGVELSHRKPEVKDVITEAIN). 2 DNA-binding regions span residues 444 to 458 (DFNTATLSDILQKLS) and 473 to 477 (KDVIT). The tract at residues 482–530 (AMTDDEEEDEEEEAEAGSDKEKEEVKGEEEEEKAEAESDKEKEKEEPKD) is disordered. Acidic residues predominate over residues 484-497 (TDDEEEDEEEEAEA). Residues 492 to 527 (EEEAEAGSDKEKEEVKGEEEEEKAEAESDKEKEKEE) adopt a coiled-coil conformation. Residues 516–530 (EAESDKEKEKEEPKD) are compositionally biased toward basic and acidic residues.

In terms of assembly, found in a mRNA splicing-dependent exon junction complex (EJC). Binds specifically histones H3 and H4.

Its subcellular location is the nucleus. The protein resides in the nucleolus. Functionally, chromatin-associated protein which contributes to the modulation of chromatin structure (such as super-helical structure of DNA) and function. Binds to chromatin of protein-coding genes throughout the genome to regulate nucleosome occupancy and chromatin accessibility, and to modulate the expression of target genes. The chain is DEK domain-containing chromatin-associated protein 2 from Arabidopsis thaliana (Mouse-ear cress).